The chain runs to 362 residues: MATLSFRNVKKTYAGNVPVIHGIDMDVADGEFIVIVGPSGCGKSTLMRMVAGLETVTEGEILIDDKVVNTLEPAERDIAMVFQNYALYPHMSVFDNMAYGLKIRRLPKDEIRKRVEAAAQILELGKLLDRRPRALSGGQRQRVAMGRAIVREPKVFLFDEPLSNLDAKLRVAMRLEILKLHRRLNTTSLYVTHDQVEAMTLAHRMVVMYQGVPEQIGTPMEVFEKPASTFVAGFIGSPPMNLLEVAVGGDGIVHTSDGIALDISPLAVPQQVRGRKVVMGLRPEHMLLNAQGLAAEIEMIETLGSEQLVHGRCGKHMVVVRCSTRQFSETPARVGDTLTIGPDGRHPLHWFEADTGRRVEGL.

One can recognise an ABC transporter domain in the interval 4–235; the sequence is LSFRNVKKTY…PASTFVAGFI (232 aa). Residue 37–44 coordinates ATP; the sequence is GPSGCGKS.

This sequence belongs to the ABC transporter superfamily. sn-glycerol-3-phosphate importer (TC 3.A.1.1.3) family. As to quaternary structure, the complex is composed of two ATP-binding proteins (UgpC), two transmembrane proteins (UgpA and UgpE) and a solute-binding protein (UgpB).

The protein resides in the cell inner membrane. It catalyses the reaction sn-glycerol 3-phosphate(out) + ATP + H2O = sn-glycerol 3-phosphate(in) + ADP + phosphate + H(+). Part of the ABC transporter complex UgpBAEC involved in sn-glycerol-3-phosphate (G3P) import. Responsible for energy coupling to the transport system. This chain is sn-glycerol-3-phosphate import ATP-binding protein UgpC, found in Bordetella bronchiseptica (strain ATCC BAA-588 / NCTC 13252 / RB50) (Alcaligenes bronchisepticus).